Consider the following 63-residue polypeptide: MRYLPVFVILLLLIASIPSDTVQLKTKDDMPLASFHGNGRRILRMLSNKRLCCVTEDWCCEWW.

Residues 1–21 form the signal peptide; it reads MRYLPVFVILLLLIASIPSDT. Positions 22 to 50 are excised as a propeptide; that stretch reads VQLKTKDDMPLASFHGNGRRILRMLSNKR.

This sequence belongs to the conotoxin T superfamily. Post-translationally, contains 2 disulfide bonds that can be either 'C1-C3, C2-C4' or 'C1-C4, C2-C3', since these disulfide connectivities have been observed for conotoxins with cysteine framework V (for examples, see AC P0DQQ7 and AC P81755). In terms of tissue distribution, expressed by the venom duct.

It is found in the secreted. This is Conotoxin Gm5.1 from Conus gloriamaris (Glory-of-the-Sea cone).